A 310-amino-acid chain; its full sequence is Phosphoribosylaminoimidazole-succinocarboxamide synthase (310 aa).

Belongs to the SAICAR synthetase family.

It carries out the reaction 5-amino-1-(5-phospho-D-ribosyl)imidazole-4-carboxylate + L-aspartate + ATP = (2S)-2-[5-amino-1-(5-phospho-beta-D-ribosyl)imidazole-4-carboxamido]succinate + ADP + phosphate + 2 H(+). Its pathway is purine metabolism; IMP biosynthesis via de novo pathway; 5-amino-1-(5-phospho-D-ribosyl)imidazole-4-carboxamide from 5-amino-1-(5-phospho-D-ribosyl)imidazole-4-carboxylate: step 1/2. This is Phosphoribosylaminoimidazole-succinocarboxamide synthase from Dechloromonas aromatica (strain RCB).